The chain runs to 97 residues: Small ribosomal subunit protein bS20 (97 aa).

Residues M1–K22 are disordered.

This sequence belongs to the bacterial ribosomal protein bS20 family.

Its function is as follows. Binds directly to 16S ribosomal RNA. In Crocosphaera subtropica (strain ATCC 51142 / BH68) (Cyanothece sp. (strain ATCC 51142)), this protein is Small ribosomal subunit protein bS20.